Reading from the N-terminus, the 695-residue chain is Lactotransferrin (695 aa).

An N-terminal signal peptide occupies residues 1–6; it reads LGLCLA. 2 Transferrin-like domains span residues 12-339 and 351-680; these read VRWC…NLRE and VVWC…NLRR. 2 disulfide bridges follow: Cys15–Cys51 and Cys25–Cys42. Asp66 serves as a coordination point for Fe(3+). Residue Lys79 is part of the active site. Tyr98 serves as a coordination point for Fe(3+). 5 disulfides stabilise this stretch: Cys121/Cys204, Cys163/Cys179, Cys166/Cys189, Cys176/Cys187, and Cys237/Cys251. 4 residues coordinate hydrogencarbonate: Thr123, Arg127, Ala129, and Gly130. Asn143 carries an N-linked (GlcNAc...) asparagine glycan. Tyr198 provides a ligand contact to Fe(3+). His259 provides a ligand contact to Fe(3+). The active-site Nucleophile is the Ser265. An N-linked (GlcNAc...) asparagine glycan is attached at Asn287. 2 disulfide bridges follow: Cys354–Cys386 and Cys364–Cys377. Asp401 lines the Fe(3+) pocket. 8 disulfide bridges follow: Cys411–Cys690, Cys431–Cys653, Cys463–Cys538, Cys487–Cys681, Cys497–Cys511, Cys508–Cys521, Cys579–Cys593, and Cys631–Cys636. Pro436 serves as a coordination point for D-glucose. Tyr439 provides a ligand contact to Fe(3+). The hydrogencarbonate site is built by Thr465, Arg469, Ala471, and Ala472. N-linked (GlcNAc...) asparagine glycosylation occurs at Asn482. Tyr532 contributes to the Fe(3+) binding site. Asn600 provides a ligand contact to D-glucose. Fe(3+) is bound at residue His601. Tyr666 is a D-glucose binding site.

This sequence belongs to the transferrin family. As to quaternary structure, monomer. Found in a complex with LTF, CLU, EPPIN and SEMG1. Found in a complex with MPO and LTF; interacts directly with CP, allows Fe(3+) incorporation into LTF and activation of CP ferroxidase activity. Poly-N-acetyllactosaminic carbohydrate moiety seems to be needed for TLR4 activation.

It is found in the secreted. It localises to the cytoplasmic granule. Functionally, transferrins are iron binding transport proteins which can bind two Fe(3+) ions in association with the binding of an anion, usually bicarbonate. In terms of biological role, major iron-binding and multifunctional protein found in exocrine fluids such as breast milk and mucosal secretions. Has antimicrobial activity, which depends on the extracellular cation concentration. Antimicrobial properties include bacteriostasis, which is related to its ability to sequester free iron and thus inhibit microbial growth, as well as direct bactericidal properties leading to the release of lipopolysaccharides from the bacterial outer membrane. Can also prevent bacterial biofilm development in P.aeruginosa infection. Has weak antifungal activity against C.albicans. Has anabolic, differentiating and anti-apoptotic effects on osteoblasts and can also inhibit osteoclastogenesis, possibly playing a role in the regulation of bone growth. Promotes binding of species C adenoviruses to epithelial cells, promoting adenovirus infection. Can inhibit papillomavirus infections. Stimulates the TLR4 signaling pathway leading to NF-kappa-B activation and subsequent pro-inflammatory cytokine production while also interfering with the lipopolysaccharide (LPS)-stimulated TLR4 signaling. Inhibits neutrophil granulocyte migration to sites of apoptosis, when secreted by apoptotic cells. Stimulates VEGFA-mediated endothelial cell migration and proliferation. Binds heparin, chondroitin sulfate and possibly other glycosaminoglycans (GAGs). Also binds specifically to pneumococcal surface protein A (PspA), the lipid A portion of bacterial lipopolysaccharide (LPS), lysozyme and DNA. Its function is as follows. Lactoferricin binds to the bacterial surface and is crucial for the bactericidal functions. Has some antiviral activity against papillomavirus infection. N-terminal region shows strong antifungal activity against C.albicans. Contains two BBXB heparin-binding consensus sequences that appear to form the predominate functional GAG-binding site. The lactotransferrin transferrin-like domain 1 functions as a serine protease of the peptidase S60 family that cuts arginine rich regions. This function contributes to the antimicrobial activity. Shows a preferential cleavage at -Arg-Ser-Arg-Arg-|- and -Arg-Arg-Ser-Arg-|-, and of Z-Phe-Arg-|-aminomethylcoumarin sites. The protein is Lactotransferrin (LTF) of Equus caballus (Horse).